A 74-amino-acid chain; its full sequence is Omega-conotoxin-like PuIIA (74 aa).

Positions Met-1–Ala-22 are cleaved as a signal peptide. Positions Glu-23 to Arg-46 are excised as a propeptide. 3 cysteine pairs are disulfide-bonded: Cys-48–Cys-62, Cys-55–Cys-66, and Cys-61–Cys-73.

The protein belongs to the conotoxin O1 superfamily. Expressed by the venom duct.

The protein resides in the secreted. In terms of biological role, omega-conotoxins act at presynaptic membranes, they bind and block voltage-gated calcium channels (Cav). This Conus pulicarius (Flea-bitten cone) protein is Omega-conotoxin-like PuIIA.